Consider the following 160-residue polypeptide: Putative pre-16S rRNA nuclease (160 aa).

It belongs to the YqgF nuclease family.

The protein resides in the cytoplasm. Could be a nuclease involved in processing of the 5'-end of pre-16S rRNA. The chain is Putative pre-16S rRNA nuclease from Rhodopseudomonas palustris (strain BisB5).